Here is a 181-residue protein sequence, read N- to C-terminus: UPF0398 protein lin2003 (181 aa).

It belongs to the UPF0398 family.

The sequence is that of UPF0398 protein lin2003 from Listeria innocua serovar 6a (strain ATCC BAA-680 / CLIP 11262).